Reading from the N-terminus, the 378-residue chain is Spermidine/putrescine import ATP-binding protein PotA (378 aa).

The 231-residue stretch at 18 to 248 (VLLSGISKSF…PKNLFVAGFI (231 aa)) folds into the ABC transporter domain. 50–57 (GPSGCGKT) contributes to the ATP binding site.

The protein belongs to the ABC transporter superfamily. Spermidine/putrescine importer (TC 3.A.1.11.1) family. In terms of assembly, the complex is composed of two ATP-binding proteins (PotA), two transmembrane proteins (PotB and PotC) and a solute-binding protein (PotD).

The protein resides in the cell inner membrane. It carries out the reaction ATP + H2O + polyamine-[polyamine-binding protein]Side 1 = ADP + phosphate + polyamineSide 2 + [polyamine-binding protein]Side 1.. In terms of biological role, part of the ABC transporter complex PotABCD involved in spermidine/putrescine import. Responsible for energy coupling to the transport system. The sequence is that of Spermidine/putrescine import ATP-binding protein PotA from Salmonella typhi.